The following is a 259-amino-acid chain: Cell division protein DivIB (259 aa).

At 1–27 (MADGKVIDIEQKVPDFREQRRRKSRRR) the chain is on the cytoplasmic side. The helical transmembrane segment at 28–45 (LVLYISILAFFLLFVYYF) threads the bilayer. The Extracellular segment spans residues 46-259 (QSDYSTVGHV…QEEEEIEIEE (214 aa)). A POTRA domain is found at 50–118 (STVGHVDVYG…RSITLYVDEY (69 aa)).

Belongs to the FtsQ/DivIB family. DivIB subfamily.

It localises to the cell membrane. Cell division protein that may be involved in stabilizing or promoting the assembly of the division complex. This Bacillus selenitireducens (strain ATCC 700615 / DSM 15326 / MLS10) protein is Cell division protein DivIB.